A 697-amino-acid polypeptide reads, in one-letter code: Portal protein (697 aa).

The tract at residues 633 to 697 (MSREAAGGVP…RRAGGPYGFH (65 aa)) is disordered. A compositionally biased stretch (basic and acidic residues) spans 664–689 (ITADEERRGPERVGRFRNGGPDDPRR).

It belongs to the herpesviridae portal protein family. As to quaternary structure, homododecamerizes. Interacts with terminase subunits TRM1 and TRM3.

Its subcellular location is the virion. The protein resides in the host nucleus. Forms a portal in the viral capsid through which viral DNA is translocated during DNA packaging. Assembles as a dodecamer at a single fivefold axe of the T=16 icosahedric capsid. Binds to the molecular motor that translocates the viral DNA, termed terminase. The polypeptide is Portal protein (UL104) (Homo sapiens (Human)).